A 326-amino-acid chain; its full sequence is GTP 3',8-cyclase (326 aa).

The region spanning 7–232 is the Radical SAM core domain; sequence GFGRSFPYLR…PRAADAGPAR (226 aa). Residue Arg-16 participates in GTP binding. [4Fe-4S] cluster-binding residues include Cys-23 and Cys-27. Residue Tyr-29 coordinates S-adenosyl-L-methionine. Position 30 (Cys-30) interacts with [4Fe-4S] cluster. Residue Arg-65 participates in GTP binding. Gly-69 is an S-adenosyl-L-methionine binding site. Thr-96 is a GTP binding site. Ser-120 is a binding site for S-adenosyl-L-methionine. Lys-157 contributes to the GTP binding site. S-adenosyl-L-methionine is bound at residue Met-191. [4Fe-4S] cluster contacts are provided by Cys-254 and Cys-257. 259 to 261 is a GTP binding site; it reads RLR. Residue Cys-271 coordinates [4Fe-4S] cluster.

Belongs to the radical SAM superfamily. MoaA family. As to quaternary structure, monomer and homodimer. Requires [4Fe-4S] cluster as cofactor.

The catalysed reaction is GTP + AH2 + S-adenosyl-L-methionine = (8S)-3',8-cyclo-7,8-dihydroguanosine 5'-triphosphate + 5'-deoxyadenosine + L-methionine + A + H(+). It participates in cofactor biosynthesis; molybdopterin biosynthesis. Catalyzes the cyclization of GTP to (8S)-3',8-cyclo-7,8-dihydroguanosine 5'-triphosphate. The polypeptide is GTP 3',8-cyclase (Stenotrophomonas maltophilia (strain K279a)).